We begin with the raw amino-acid sequence, 471 residues long: Major facilitator-type transporter psiT1 (471 aa).

A disordered region spans residues 1–36 (MNPTTATDAHERTSLLSGRPQSAANSTAPYERQVQP). Polar residues predominate over residues 14–36 (SLLSGRPQSAANSTAPYERQVQP). The N-linked (GlcNAc...) asparagine glycan is linked to Asn-25. Helical transmembrane passes span 44–64 (TPVT…TMVI), 108–128 (AIMV…GTGI), 140–160 (PVLM…LTVQ), 168–188 (LVTF…TTVF), 212–232 (GWLV…TTFL), 237–257 (AVYI…AFVL), 322–342 (LHSF…LIFF), and 356–376 (VMTT…PLFI). N-linked (GlcNAc...) asparagine glycosylation occurs at Asn-384. Residues 424 to 444 (VHITVISWTIESLAYIVLGTV) traverse the membrane as a helical segment.

It belongs to the major facilitator superfamily. TCR/Tet family.

The protein resides in the membrane. In terms of biological role, major facilitator-type transporter; part of the gene cluster that mediates the biosynthesis of psilocybin, a psychotropic tryptamine-derived natural product. The polypeptide is Major facilitator-type transporter psiT1 (Psilocybe cyanescens).